Consider the following 362-residue polypeptide: Phosphoserine aminotransferase (362 aa).

Positions 9 and 42 each coordinate L-glutamate. Residues 76 to 77 (GR), Trp-102, Thr-153, Asp-174, and Gln-197 contribute to the pyridoxal 5'-phosphate site. Residue Lys-198 is modified to N6-(pyridoxal phosphate)lysine. Position 239–240 (239–240 (NT)) interacts with pyridoxal 5'-phosphate.

Belongs to the class-V pyridoxal-phosphate-dependent aminotransferase family. SerC subfamily. Homodimer. Pyridoxal 5'-phosphate serves as cofactor.

The protein localises to the cytoplasm. It catalyses the reaction O-phospho-L-serine + 2-oxoglutarate = 3-phosphooxypyruvate + L-glutamate. The enzyme catalyses 4-(phosphooxy)-L-threonine + 2-oxoglutarate = (R)-3-hydroxy-2-oxo-4-phosphooxybutanoate + L-glutamate. Its pathway is amino-acid biosynthesis; L-serine biosynthesis; L-serine from 3-phospho-D-glycerate: step 2/3. It functions in the pathway cofactor biosynthesis; pyridoxine 5'-phosphate biosynthesis; pyridoxine 5'-phosphate from D-erythrose 4-phosphate: step 3/5. In terms of biological role, catalyzes the reversible conversion of 3-phosphohydroxypyruvate to phosphoserine and of 3-hydroxy-2-oxo-4-phosphonooxybutanoate to phosphohydroxythreonine. This chain is Phosphoserine aminotransferase, found in Escherichia coli O6:K15:H31 (strain 536 / UPEC).